Here is a 151-residue protein sequence, read N- to C-terminus: RNA polymerase-binding transcription factor DksA (151 aa).

Positions 33–54 (NEAQLAHFRRILEAWRNQLRDE) form a coiled coil. Residues cysteine 114, cysteine 117, cysteine 135, and cysteine 138 each coordinate Zn(2+). The segment at 114 to 138 (CESCGVEIGIRRLEARPTADLCIDC) adopts a dksA C4-type zinc-finger fold.

This sequence belongs to the DksA family. Interacts directly with the RNA polymerase.

It is found in the cytoplasm. Functionally, transcription factor that acts by binding directly to the RNA polymerase (RNAP). Required for negative regulation of rRNA expression and positive regulation of several amino acid biosynthesis promoters. Also required for regulation of fis expression. The polypeptide is RNA polymerase-binding transcription factor DksA (Escherichia coli O157:H7).